A 100-amino-acid chain; its full sequence is Small ribosomal subunit protein uS14c (100 aa).

This sequence belongs to the universal ribosomal protein uS14 family. As to quaternary structure, part of the 30S ribosomal subunit.

Its subcellular location is the plastid. It localises to the chloroplast. Binds 16S rRNA, required for the assembly of 30S particles. The polypeptide is Small ribosomal subunit protein uS14c (Populus alba (White poplar)).